A 203-amino-acid polypeptide reads, in one-letter code: uncharacterized protein (203 aa).

The next 4 helical transmembrane spans lie at 9 to 29 (YNVFVANLALVLGFMLNIVVA), 42 to 62 (FLFLTPFLGIVAASIFYFFDV), 86 to 106 (SGVFVFFANILVNVILLALLV), and 126 to 146 (YPLLWSAVGVSIFLSLISIGL). 2 stretches are compositionally biased toward basic and acidic residues: residues 164-174 (GEPTAADKTDS) and 182-191 (DQTKSKKDGD). The disordered stretch occupies residues 164–203 (GEPTAADKTDSRPVVVDLDQTKSKKDGDNPPQASGDMTSL). Over residues 194–203 (PQASGDMTSL) the composition is skewed to polar residues.

The protein resides in the cell membrane. This is an uncharacterized protein from Mycoplasma pneumoniae (strain ATCC 29342 / M129 / Subtype 1) (Mycoplasmoides pneumoniae).